We begin with the raw amino-acid sequence, 450 residues long: Neuraminidase (450 aa).

At 1–6 the chain is on the intravirion side; sequence MNPNQK. Residues 7 to 27 form a helical membrane-spanning segment; the sequence is IITIGSICMVVGIISLMLQIG. An involved in apical transport and lipid raft association region spans residues 11-33; it reads GSICMVVGIISLMLQIGNIISVW. Topologically, residues 28–450 are virion surface; the sequence is NIISVWVSHI…GADLPFTIDK (423 aa). Positions 36-71 are hypervariable stalk region; sequence HIIQTWHPNQPEPCNQSINFYTEQAAASVTLAGNSS. Asn50 and Asn69 each carry an N-linked (GlcNAc...) asparagine; by host glycan. The head of neuraminidase stretch occupies residues 72–450; that stretch reads LCPISGWAIY…GADLPFTIDK (379 aa). Cystine bridges form between Cys73/Cys398, Cys105/Cys110, Cys165/Cys212, Cys214/Cys219, Cys260/Cys273, Cys262/Cys271, Cys299/Cys316, and Cys402/Cys427. Arg99 is a substrate binding site. A glycan (N-linked (GlcNAc...) asparagine; by host) is linked at Asn127. Asp132 functions as the Proton donor/acceptor in the catalytic mechanism. Arg133 contacts substrate. N-linked (GlcNAc...) asparagine; by host glycosylation is present at Asn216. Residue 258–259 participates in substrate binding; sequence EE. Position 274 (Arg274) interacts with substrate. Asp275, Gly279, and Asp305 together coordinate Ca(2+). A substrate-binding site is contributed by Arg349. Tyr383 (nucleophile) is an active-site residue.

Belongs to the glycosyl hydrolase 34 family. In terms of assembly, homotetramer. Requires Ca(2+) as cofactor. N-glycosylated.

It is found in the virion membrane. It localises to the host apical cell membrane. The enzyme catalyses Hydrolysis of alpha-(2-&gt;3)-, alpha-(2-&gt;6)-, alpha-(2-&gt;8)- glycosidic linkages of terminal sialic acid residues in oligosaccharides, glycoproteins, glycolipids, colominic acid and synthetic substrates.. With respect to regulation, inhibited by the neuraminidase inhibitors zanamivir (Relenza) and oseltamivir (Tamiflu). These drugs interfere with the release of progeny virus from infected cells and are effective against all influenza strains. Resistance to neuraminidase inhibitors is quite rare. Its function is as follows. Catalyzes the removal of terminal sialic acid residues from viral and cellular glycoconjugates. Cleaves off the terminal sialic acids on the glycosylated HA during virus budding to facilitate virus release. Additionally helps virus spread through the circulation by further removing sialic acids from the cell surface. These cleavages prevent self-aggregation and ensure the efficient spread of the progeny virus from cell to cell. Otherwise, infection would be limited to one round of replication. Described as a receptor-destroying enzyme because it cleaves a terminal sialic acid from the cellular receptors. May facilitate viral invasion of the upper airways by cleaving the sialic acid moieties on the mucin of the airway epithelial cells. Likely to plays a role in the budding process through its association with lipid rafts during intracellular transport. May additionally display a raft-association independent effect on budding. Plays a role in the determination of host range restriction on replication and virulence. Sialidase activity in late endosome/lysosome traffic seems to enhance virus replication. In Influenza A virus (strain A/Hong Kong/156/1997 H5N1 genotype Gs/Gd), this protein is Neuraminidase.